A 254-amino-acid polypeptide reads, in one-letter code: Small ribosomal subunit protein uS2 (254 aa).

The protein belongs to the universal ribosomal protein uS2 family.

The protein is Small ribosomal subunit protein uS2 of Legionella pneumophila (strain Lens).